We begin with the raw amino-acid sequence, 324 residues long: tRNA N6-adenosine threonylcarbamoyltransferase (324 aa).

Fe cation is bound by residues His-107, His-111, and Tyr-127. Substrate contacts are provided by residues 127-131 (YVSGG), Asp-159, Gly-172, Glu-176, and Asn-257. Asp-285 contributes to the Fe cation binding site.

The protein belongs to the KAE1 / TsaD family. In terms of assembly, monomer. Component of the KEOPS complex that consists of Kae1, Bud32, Cgi121 and Pcc1; the whole complex dimerizes. It depends on Fe(2+) as a cofactor.

The protein resides in the cytoplasm. It carries out the reaction L-threonylcarbamoyladenylate + adenosine(37) in tRNA = N(6)-L-threonylcarbamoyladenosine(37) in tRNA + AMP + H(+). Required for the formation of a threonylcarbamoyl group on adenosine at position 37 (t(6)A37) in tRNAs that read codons beginning with adenine. Is a component of the KEOPS complex that is probably involved in the transfer of the threonylcarbamoyl moiety of threonylcarbamoyl-AMP (TC-AMP) to the N6 group of A37. Kae1 likely plays a direct catalytic role in this reaction, but requires other protein(s) of the complex to fulfill this activity. In vitro, binds tRNA, ssRNA, both single- and double-stranded DNA, and exhibits a low ATPase activity. The sequence is that of tRNA N6-adenosine threonylcarbamoyltransferase from Pyrococcus abyssi (strain GE5 / Orsay).